We begin with the raw amino-acid sequence, 208 residues long: ATP-dependent dethiobiotin synthetase BioD (208 aa).

11–16 (EVGKTF) lines the ATP pocket. Residue threonine 15 coordinates Mg(2+). The active site involves lysine 31. A substrate-binding site is contributed by serine 35. Residues aspartate 42, 95–98 (ETSG), and 155–156 (NQ) contribute to the ATP site. The Mg(2+) site is built by aspartate 42 and glutamate 95.

It belongs to the dethiobiotin synthetase family. As to quaternary structure, homodimer. Mg(2+) serves as cofactor.

Its subcellular location is the cytoplasm. It catalyses the reaction (7R,8S)-7,8-diammoniononanoate + CO2 + ATP = (4R,5S)-dethiobiotin + ADP + phosphate + 3 H(+). It functions in the pathway cofactor biosynthesis; biotin biosynthesis; biotin from 7,8-diaminononanoate: step 1/2. Catalyzes a mechanistically unusual reaction, the ATP-dependent insertion of CO2 between the N7 and N8 nitrogen atoms of 7,8-diaminopelargonic acid (DAPA, also called 7,8-diammoniononanoate) to form a ureido ring. The chain is ATP-dependent dethiobiotin synthetase BioD from Chlamydia felis (strain Fe/C-56) (Chlamydophila felis).